The following is a 275-amino-acid chain: NH(3)-dependent NAD(+) synthetase (275 aa).

Residue 50-57 (GISGGVDS) participates in ATP binding. Asp56 lines the Mg(2+) pocket. Arg147 is a deamido-NAD(+) binding site. ATP is bound at residue Thr167. Residue Glu172 coordinates Mg(2+). Positions 180 and 187 each coordinate deamido-NAD(+). Lys196 and Thr218 together coordinate ATP. Residue 267–268 (HK) coordinates deamido-NAD(+).

Belongs to the NAD synthetase family. In terms of assembly, homodimer.

It catalyses the reaction deamido-NAD(+) + NH4(+) + ATP = AMP + diphosphate + NAD(+) + H(+). The protein operates within cofactor biosynthesis; NAD(+) biosynthesis; NAD(+) from deamido-NAD(+) (ammonia route): step 1/1. Functionally, catalyzes the ATP-dependent amidation of deamido-NAD to form NAD. Uses ammonia as a nitrogen source. The chain is NH(3)-dependent NAD(+) synthetase from Ectopseudomonas mendocina (strain ymp) (Pseudomonas mendocina).